A 261-amino-acid polypeptide reads, in one-letter code: Indole-3-glycerol phosphate synthase (261 aa).

The protein belongs to the TrpC family.

The enzyme catalyses 1-(2-carboxyphenylamino)-1-deoxy-D-ribulose 5-phosphate + H(+) = (1S,2R)-1-C-(indol-3-yl)glycerol 3-phosphate + CO2 + H2O. The protein operates within amino-acid biosynthesis; L-tryptophan biosynthesis; L-tryptophan from chorismate: step 4/5. The sequence is that of Indole-3-glycerol phosphate synthase from Alkaliphilus metalliredigens (strain QYMF).